Reading from the N-terminus, the 246-residue chain is Major prion protein (246 aa).

Positions 1 to 15 are cleaved as a signal peptide; that stretch reads MLVLFVATWSDLGLC. Residues 16–223 are interaction with GRB2, ERI3 and SYN1; that stretch reads KKRPKPGGWN…ESQAYYQRGS (208 aa). The tract at residues 18–102 is disordered; the sequence is RPKPGGWNTG…HKPSKPKTSM (85 aa). Repeat copies occupy residues 44–52, 53–60, 61–68, 69–76, and 77–84. Residues 44–84 are 5 X 8 AA tandem repeats of P-H-G-G-G-W-G-Q; sequence PQGGGGWGQPHGGGWGQPHGGGWGQPHGGGWGQPHGGGWGQ. Residues 45-88 are compositionally biased toward gly residues; that stretch reads QGGGGWGQPHGGGWGQPHGGGWGQPHGGGWGQPHGGGWGQGGGT. Cu(2+) contacts are provided by His54, Gly55, Gly56, His62, Gly63, Gly64, His70, Gly71, Gly72, His78, Gly79, and Gly80. The span at 91–102 shows a compositional bias: basic residues; it reads QWHKPSKPKTSM. The cysteines at positions 172 and 207 are disulfide-linked. 2 N-linked (GlcNAc...) asparagine glycosylation sites follow: Asn174 and Asn190. Ser223 carries the GPI-anchor amidated serine lipid modification. Positions 224–246 are cleaved as a propeptide — removed in mature form; it reads SMVLFSSPPVILLISFLIFLIVG.

Belongs to the prion family. In terms of assembly, monomer and homodimer. Has a tendency to aggregate into amyloid fibrils containing a cross-beta spine, formed by a steric zipper of superposed beta-strands. Soluble oligomers may represent an intermediate stage on the path to fibril formation. Copper binding may promote oligomerization. Interacts with GRB2, APP, ERI3/PRNPIP and SYN1. Mislocalized cytosolically exposed PrP interacts with MGRN1; this interaction alters MGRN1 subcellular location and causes lysosomal enlargement. Interacts with KIAA1191.

It localises to the cell membrane. It is found in the golgi apparatus. In terms of biological role, its primary physiological function is unclear. Has cytoprotective activity against internal or environmental stresses. May play a role in neuronal development and synaptic plasticity. May be required for neuronal myelin sheath maintenance. May play a role in iron uptake and iron homeostasis. Soluble oligomers are toxic to cultured neuroblastoma cells and induce apoptosis (in vitro). Association with GPC1 (via its heparan sulfate chains) targets PRNP to lipid rafts. Also provides Cu(2+) or Zn(2+) for the ascorbate-mediated GPC1 deaminase degradation of its heparan sulfate side chains. The polypeptide is Major prion protein (PRNP) (Cercocebus atys (Sooty mangabey)).